The chain runs to 354 residues: Caffeate O-methyltransferase-like protein 2 (354 aa).

S-adenosyl-L-homocysteine is bound by residues Gly198, Asp221, Met242, and Lys255. His259 serves as the catalytic Proton acceptor. Catalysis depends on residues Glu287 and Glu319.

This sequence belongs to the class I-like SAM-binding methyltransferase superfamily. Cation-independent O-methyltransferase family. COMT subfamily.

The chain is Caffeate O-methyltransferase-like protein 2 from Oryza sativa subsp. japonica (Rice).